Reading from the N-terminus, the 533-residue chain is Probable RNA-binding protein 46 (533 aa).

3 consecutive RRM domains span residues 61 to 139 (CEVF…VSLD), 141 to 223 (CRLF…WADP), and 236 to 308 (KVLY…LAKP). The interval 338–362 (ESHSKSLGKPPTLPTRLNGQHSPSP) is disordered.

As to quaternary structure, interacts with YTHDC2, MEIOC, MOV10, CNOT6L, DDX4, UPF1 and PABPC1. As to expression, expressed in the testis and ovary (at protein level). Expressed in spermatogonia and spermatocytes in testis (at protein level).

It localises to the cytoplasm. Essential for male and female fertility, playing a crucial role in regulating germ cell development by ensuring the proper progression of meiosis prophase I. Regulates mitotic-to-meiotic transition in spermatogenesis by forming a complex with MEIOC and YTHDC2 which recognizes and down-regulates mitotic transcripts for a successful meiotic entry. Required for normal synaptonemal complex formation during meiosis, binding meiotic cohesin subunit mRNAs containing GCCUAU/GUUCGA motifs in their 3'UTRs regions and positively regulating their translation. Required for spermatogonial differentiation in both developing and adult testis. The sequence is that of Probable RNA-binding protein 46 from Mus musculus (Mouse).